The following is a 424-amino-acid chain: Riboflavin biosynthesis protein RibBA (424 aa).

The interval 1 to 206 is DHBP synthase; that stretch reads MVTCEAGIAS…VDDLITYRWT (206 aa). D-ribulose 5-phosphate is bound by residues 32-33, D37, 145-149, and E169; these read RE and RPGHT. E33 serves as a coordination point for Mg(2+). H148 serves as a coordination point for Mg(2+). The segment at 207–424 is GTP cyclohydrolase II; the sequence is FDSLVEHVSS…YETVERTSCC (218 aa). A GTP-binding site is contributed by 257–261; that stretch reads RVHSE. Positions 262, 273, and 275 each coordinate Zn(2+). GTP is bound by residues Q278, 301–303, and T323; that span reads EGR. D335 (proton acceptor; for GTP cyclohydrolase activity) is an active-site residue. Catalysis depends on R337, which acts as the Nucleophile; for GTP cyclohydrolase activity. GTP-binding residues include T358 and K363.

In the N-terminal section; belongs to the DHBP synthase family. This sequence in the C-terminal section; belongs to the GTP cyclohydrolase II family. It depends on Mg(2+) as a cofactor. Mn(2+) serves as cofactor. Zn(2+) is required as a cofactor.

It carries out the reaction D-ribulose 5-phosphate = (2S)-2-hydroxy-3-oxobutyl phosphate + formate + H(+). The catalysed reaction is GTP + 4 H2O = 2,5-diamino-6-hydroxy-4-(5-phosphoribosylamino)-pyrimidine + formate + 2 phosphate + 3 H(+). Its pathway is cofactor biosynthesis; riboflavin biosynthesis; 2-hydroxy-3-oxobutyl phosphate from D-ribulose 5-phosphate: step 1/1. The protein operates within cofactor biosynthesis; riboflavin biosynthesis; 5-amino-6-(D-ribitylamino)uracil from GTP: step 1/4. Its function is as follows. Catalyzes the conversion of D-ribulose 5-phosphate to formate and 3,4-dihydroxy-2-butanone 4-phosphate. Functionally, catalyzes the conversion of GTP to 2,5-diamino-6-ribosylamino-4(3H)-pyrimidinone 5'-phosphate (DARP), formate and pyrophosphate. This is Riboflavin biosynthesis protein RibBA from Chlamydia muridarum (strain MoPn / Nigg).